We begin with the raw amino-acid sequence, 671 residues long: Protein cereblon (671 aa).

Residues 1–11 show a composition bias toward acidic residues; the sequence is MDGEEAADIDE. Disordered stretches follow at residues 1–59, 104–130, and 150–187; these read MDGE…VDGD, LTGT…PAQP, and GHNV…DAEA. 2 stretches are compositionally biased toward low complexity: residues 39 to 51 and 105 to 115; these read QQQQ…SSGE and TGTTTPTPTAP. The span at 162 to 173 shows a compositional bias: polar residues; the sequence is SISSRHSGSDMS. The region spanning 309–537 is the Lon N-terminal domain; that stretch reads RMLIFMHQHI…IIGSTLKQES (229 aa). The CULT domain maps to 536–645; it reads ESLFYCRYCN…LAGSSVRIGK (110 aa). Residues C541, C544, C610, and C613 each coordinate Zn(2+).

This sequence belongs to the CRBN family. Likely a component of a DCX (DDB1-CUL4-X-box) protein ligase complex. May interact with pic/DDB1. In terms of processing, ubiquitinated.

It localises to the nucleus. Its pathway is protein modification; protein ubiquitination. Its function is as follows. Substrate recognition component of a DCX (DDB1-CUL4-X-box) E3 protein ligase complex that mediates the ubiquitination and subsequent proteasomal degradation of target proteins. Has an essential role in mediating growth by negatively regulating insulin signaling. It also has a role in maintaining presynaptic function in the neuromuscular junction synapses of third-instar larvae. The polypeptide is Protein cereblon (Drosophila grimshawi (Hawaiian fruit fly)).